A 704-amino-acid chain; its full sequence is DNA ligase (704 aa).

NAD(+)-binding positions include 43–47 (DADYD), 92–93 (SL), and E124. The active-site N6-AMP-lysine intermediate is K126. NAD(+)-binding residues include R147, E182, K298, and K322. Residues C427, C430, C445, and C451 each coordinate Zn(2+). The 80-residue stretch at 625–704 (PVASPVAGKI…DGWLRLIGDA (80 aa)) folds into the BRCT domain.

This sequence belongs to the NAD-dependent DNA ligase family. LigA subfamily. The cofactor is Mg(2+). Mn(2+) serves as cofactor.

The catalysed reaction is NAD(+) + (deoxyribonucleotide)n-3'-hydroxyl + 5'-phospho-(deoxyribonucleotide)m = (deoxyribonucleotide)n+m + AMP + beta-nicotinamide D-nucleotide.. In terms of biological role, DNA ligase that catalyzes the formation of phosphodiester linkages between 5'-phosphoryl and 3'-hydroxyl groups in double-stranded DNA using NAD as a coenzyme and as the energy source for the reaction. It is essential for DNA replication and repair of damaged DNA. The polypeptide is DNA ligase (Cereibacter sphaeroides (strain ATCC 17029 / ATH 2.4.9) (Rhodobacter sphaeroides)).